The chain runs to 154 residues: Transcriptional repressor NrdR (154 aa).

A zinc finger lies at 3–34; sequence CPFCRHPDSRVVDSREADEGQAIRRRRSCPEC. In terms of domain architecture, ATP-cone spans 46 to 136; sequence LAVVKRSGVT…VYRGFSSAED (91 aa).

Belongs to the NrdR family. Zn(2+) serves as cofactor.

Functionally, negatively regulates transcription of bacterial ribonucleotide reductase nrd genes and operons by binding to NrdR-boxes. The sequence is that of Transcriptional repressor NrdR from Mycobacteroides abscessus (strain ATCC 19977 / DSM 44196 / CCUG 20993 / CIP 104536 / JCM 13569 / NCTC 13031 / TMC 1543 / L948) (Mycobacterium abscessus).